The primary structure comprises 225 residues: Uracil-DNA glycosylase (225 aa).

Asp-65 acts as the Proton acceptor in catalysis.

The protein belongs to the uracil-DNA glycosylase (UDG) superfamily. UNG family.

It is found in the cytoplasm. The catalysed reaction is Hydrolyzes single-stranded DNA or mismatched double-stranded DNA and polynucleotides, releasing free uracil.. Its function is as follows. Excises uracil residues from the DNA which can arise as a result of misincorporation of dUMP residues by DNA polymerase or due to deamination of cytosine. This is Uracil-DNA glycosylase from Clostridium botulinum (strain Alaska E43 / Type E3).